Here is an 81-residue protein sequence, read N- to C-terminus: uncharacterized protein (81 aa).

Helical transmembrane passes span 1–21 and 27–47; these read MTLFSFFLVILSFYYILFSLL and IFIYIKIIPTVSYFHFNHHFF.

The protein localises to the membrane. This is an uncharacterized protein from Saccharomyces cerevisiae (strain ATCC 204508 / S288c) (Baker's yeast).